The primary structure comprises 218 residues: Elongation factor Ts (218 aa).

An involved in Mg(2+) ion dislocation from EF-Tu region spans residues 82–85; sequence TDFV.

The protein belongs to the EF-Ts family.

The protein localises to the cytoplasm. Its function is as follows. Associates with the EF-Tu.GDP complex and induces the exchange of GDP to GTP. It remains bound to the aminoacyl-tRNA.EF-Tu.GTP complex up to the GTP hydrolysis stage on the ribosome. The sequence is that of Elongation factor Ts from Picosynechococcus sp. (strain ATCC 27264 / PCC 7002 / PR-6) (Agmenellum quadruplicatum).